A 193-amino-acid chain; its full sequence is Adenylate kinase (193 aa).

Residue 11-16 (GSGKGT) coordinates ATP. The tract at residues 31-60 (STGDIFRANVKGETPLGLEAKKYMDAGDYV) is NMP. AMP contacts are provided by residues Thr32, Arg37, 58 to 60 (DYV), 86 to 89 (GYPR), and Gln93. The interval 127–137 (GRAKESGRSDD) is LID. Arg128 contacts ATP. Residues Arg134 and Arg145 each contribute to the AMP site. Residue Gly173 coordinates ATP.

It belongs to the adenylate kinase family. In terms of assembly, monomer.

The protein resides in the cytoplasm. It catalyses the reaction AMP + ATP = 2 ADP. Its pathway is purine metabolism; AMP biosynthesis via salvage pathway; AMP from ADP: step 1/1. Functionally, catalyzes the reversible transfer of the terminal phosphate group between ATP and AMP. Plays an important role in cellular energy homeostasis and in adenine nucleotide metabolism. The sequence is that of Adenylate kinase from Renibacterium salmoninarum (strain ATCC 33209 / DSM 20767 / JCM 11484 / NBRC 15589 / NCIMB 2235).